We begin with the raw amino-acid sequence, 545 residues long: MNEAKTLVIRGNLVDIINRRTFGAEISILNGHIGKVIPTGQDEGSYLLPGFIDAHVHIESSMVTPAAFIHAAVRHGSIGAVADPHEIANVMGTEGVEYMLDNAKGIPFYTWFGVPSCVPATIMETSGAIIDADETARLLEREDLHFLAEMMNYPGVLNKDPEVMRKIEAAKNAGKPIDGHYPLATGPKLKAYIESGISTDHETIYLEKGREKCELGMHVLIREGSAAKNFDALHPLLKEYPEQIMFCTDDAHPSFLNKGHINRMVKKSLDLGYDLYDVLRAASYNPAMHYKIPAGFLREGDSADFIQVNNLKNLTIQATYIQGTCVYDGEKCTLPFHKPILRNNFHTKPIPLEKLAVKAKGKQMRVIVCEDRELITKEELYPVHTFDGFVESDTERDILKLVILNRYQTAPPAIAFIKGTGLKLGAIAQSISHDSHNIIAIGVTDFELMQAINVVIKAKGGIAVSCMDEVTLLPLPVAGLMSDESLEETSRRYEEIEEKIKRLKSPMDSLQMTLSFMGLLAIPSLKLSNKGLFNSETFQFTSLFV.

Belongs to the metallo-dependent hydrolases superfamily. Adenine deaminase family. The cofactor is Mn(2+).

It catalyses the reaction adenine + H2O + H(+) = hypoxanthine + NH4(+). The sequence is that of Adenine deaminase from Parabacteroides distasonis (strain ATCC 8503 / DSM 20701 / CIP 104284 / JCM 5825 / NCTC 11152).